Reading from the N-terminus, the 726-residue chain is BRCA1-A complex subunit RAP80 (726 aa).

A disordered region spans residues 1–27 (MPRRKKKIKEASEGQNLEKKDLETTSS). Positions 1–101 (MPRRKKKIKE…SEQEAKEVNN (101 aa)) are necessary for transcriptional repression. Basic and acidic residues predominate over residues 9-23 (KEASEGQNLEKKDLE). A Glycyl lysine isopeptide (Lys-Gly) (interchain with G-Cter in SUMO2) cross-link involves residue Lys20. At Ser29 the chain carries Phosphoserine. Residue Lys31 forms a Glycyl lysine isopeptide (Lys-Gly) (interchain with G-Cter in SUMO2) linkage. Ser44 and Ser46 each carry phosphoserine. The segment at 47–67 (DGEETKEENGLQKMKTKQSNR) is disordered. Thr51 carries the phosphothreonine modification. The LR motif motif lies at 60-78 (MKTKQSNRSKCLAKRKIAQ). Residues Lys75 and Lys90 each participate in a glycyl lysine isopeptide (Lys-Gly) (interchain with G-Cter in SUMO2) cross-link. UIM domains follow at residues 80–99 (SEEEQFALALKMSEQEAKEV) and 104–124 (EKEEELLRKAIAESLNSRWSS). Disordered regions lie at residues 93–112 (EQEAKEVNNQEEKEEELLRK) and 119–208 (NSRW…SRPV). Residues 97 to 103 (KEVNNQE) form a UIM-linker region. The tract at residues 100-200 (NNQEEKEEEL…EEPLSGSSGS (101 aa)) is necessary for interaction with NR6A1 N-terminus. Ser140 is modified (phosphoserine). Positions 177–188 (EEGKEPWDHSEN) are enriched in basic and acidic residues. A compositionally biased stretch (low complexity) spans 194-205 (LSGSSGSQDQSS). Phosphoserine is present on Ser205. Lys245 is covalently cross-linked (Glycyl lysine isopeptide (Lys-Gly) (interchain with G-Cter in SUMO2)). The interval 270–400 (IGGTVHYYWG…EEEPTTGRGQ (131 aa)) is AIR. The disordered stretch occupies residues 356 to 411 (GAREERQGSGASVWHSETKDSQKSPITSLKQRLLLEEEPTTGRGQSSQGLFVEETS). 3 positions are modified to phosphoserine: Ser379, Ser402, and Ser427. The segment at 400 to 507 (QSSQGLFVEE…DSRPPAVSAS (108 aa)) is necessary for interaction with NR6A1 C-terminus. Lys436 participates in a covalent cross-link: Glycyl lysine isopeptide (Lys-Gly) (interchain with G-Cter in SUMO2). The segment at 509 to 536 (RVSCPLCNQDFPPTKIEQHAMYCTGLME) adopts a UBZ4-type zinc-finger fold. Zn(2+) contacts are provided by Cys512, Cys515, His527, and Cys531. The segment at 512-589 (CPLCNQDFPP…GEYQCHVETC (78 aa)) is zinc-finger-like region. Residues Lys551, Lys569, and Lys616 each participate in a glycyl lysine isopeptide (Lys-Gly) (interchain with G-Cter in SUMO2) cross-link. The interval 611 to 675 (APVEGKPKQR…DVEEAGCSRE (65 aa)) is disordered. Ser636 bears the Phosphoserine mark. Basic and acidic residues predominate over residues 640 to 653 (QSEHRTTGVERTPK). Phosphoserine is present on residues Ser664 and Ser688. Lys707 participates in a covalent cross-link: Glycyl lysine isopeptide (Lys-Gly) (interchain with G-Cter in SUMO2).

The protein belongs to the RAP80 family. In terms of assembly, component of the ARISC complex, at least composed of UIMC1/RAP80, ABRAXAS1, BRCC3/BRCC36, BABAM2 and BABAM1/NBA1. Component of the BRCA1-A complex, at least composed of the BRCA1, BARD1, UIMC1/RAP80, ABRAXAS1, BRCC3/BRCC36, BABAM2 and BABAM1/NBA1. In the BRCA1-A complex, interacts directly with ABRAXAS1. Interacts with UBE2I. Interacts with NR6A1. Interacts with ESR1. Interacts with TSP57. Interacts with TRAIP. Post-translationally, sumoylated. In terms of processing, phosphorylated upon DNA damage by ATM or ATR.

It localises to the nucleus. Ubiquitin-binding protein. Specifically recognizes and binds 'Lys-63'-linked ubiquitin. Plays a central role in the BRCA1-A complex by specifically binding 'Lys-63'-linked ubiquitinated histones H2A and H2AX at DNA lesions sites, leading to target the BRCA1-BARD1 heterodimer to sites of DNA damage at double-strand breaks (DSBs). The BRCA1-A complex also possesses deubiquitinase activity that specifically removes 'Lys-63'-linked ubiquitin on histones H2A and H2AX. Also weakly binds monoubiquitin but with much less affinity than 'Lys-63'-linked ubiquitin. May interact with monoubiquitinated histones H2A and H2B; the relevance of such results is however unclear in vivo. Does not bind Lys-48'-linked ubiquitin. May indirectly act as a transcriptional repressor by inhibiting the interaction of NR6A1 with the corepressor NCOR1. This chain is BRCA1-A complex subunit RAP80 (Uimc1), found in Rattus norvegicus (Rat).